The chain runs to 337 residues: Monoacylglycerol lipase ABHD6 (337 aa).

Residues 1 to 8 (MDLDVVNM) lie on the Extracellular side of the membrane. Residues 9 to 29 (FVIAGGTLAIPILAFVASFLL) traverse the membrane as a helical; Signal-anchor for type II membrane protein segment. Residues 30 to 337 (WPSALIRIYY…HNPDNNKKLN (308 aa)) lie on the Cytoplasmic side of the membrane. S148 (nucleophile) is an active-site residue. Active-site charge relay system residues include D278 and H306.

The protein belongs to the AB hydrolase superfamily.

The protein resides in the late endosome membrane. The protein localises to the lysosome membrane. Its subcellular location is the mitochondrion membrane. The catalysed reaction is Hydrolyzes glycerol monoesters of long-chain fatty acids.. It carries out the reaction 1-octanoylglycerol + H2O = octanoate + glycerol + H(+). It catalyses the reaction 1-decanoylglycerol + H2O = decanoate + glycerol + H(+). The enzyme catalyses 1-dodecanoylglycerol + H2O = dodecanoate + glycerol + H(+). The catalysed reaction is 1-tetradecanoylglycerol + H2O = tetradecanoate + glycerol + H(+). It carries out the reaction 2-hexadecanoylglycerol + H2O = glycerol + hexadecanoate + H(+). It catalyses the reaction 2-(9Z-octadecenoyl)-glycerol + H2O = glycerol + (9Z)-octadecenoate + H(+). The enzyme catalyses 1-(9Z-octadecenoyl)-glycerol + H2O = glycerol + (9Z)-octadecenoate + H(+). The catalysed reaction is 2-(9Z,12Z-octadecadienoyl)-glycerol + H2O = (9Z,12Z)-octadecadienoate + glycerol + H(+). It carries out the reaction 2-(5Z,8Z,11Z,14Z-eicosatetraenoyl)-glycerol + H2O = glycerol + (5Z,8Z,11Z,14Z)-eicosatetraenoate + H(+). It catalyses the reaction 1-(5Z,8Z,11Z,14Z-eicosatetraenoyl)-glycerol + H2O = glycerol + (5Z,8Z,11Z,14Z)-eicosatetraenoate + H(+). The enzyme catalyses 1-(9Z,12Z-octadecadienoyl)-glycerol + H2O = (9Z,12Z)-octadecadienoate + glycerol + H(+). The catalysed reaction is 3-(9Z-octadecenoyl)-sn-glycero-1-phospho-(3'-(9Z-octadecenoyl)-1'-sn-glycerol) + H2O = 3-(9Z-octadecenoyl)-sn-glycero-1-phospho-(1'-sn-glycerol) + (9Z)-octadecenoate + H(+). It carries out the reaction (S,S)-2-(9Z-octadecenoyl)-sn-glycero-1-phospho-(2'-(9Z-octadecenoyl)-1'-sn-glycerol) + H2O = (S,S)-2-(9Z-octadecenoyl)-sn-glycero-1-phospho-(1'-sn-glycerol) + (9Z)-octadecenoate + H(+). It catalyses the reaction (R,R)-2-(9Z-octadecenoyl)-sn-glycero-3-phospho-(2'-(9Z-octadecenoyl)-3'-sn-glycerol) + H2O = (R,R)-2-(9Z-octadecenoyl)-sn-glycero-3-phospho-(3'-sn-glycerol) + (9Z)-octadecenoate + H(+). Its function is as follows. Lipase that preferentially hydrolysis medium-chain saturated monoacylglycerols including 2-arachidonoylglycerol. Through 2-arachidonoylglycerol degradation may regulate endocannabinoid signaling pathways. Also has a lysophosphatidyl lipase activity with a preference for lysophosphatidylglycerol among other lysophospholipids. Also able to degrade bis(monoacylglycero)phosphate (BMP) and constitutes the major enzyme for BMP catabolism. BMP, also known as lysobisphosphatidic acid, is enriched in late endosomes and lysosomes and plays a key role in the formation of intraluminal vesicles and in lipid sorting. In Rattus norvegicus (Rat), this protein is Monoacylglycerol lipase ABHD6.